The primary structure comprises 204 residues: Ubiquitin-conjugating enzyme E2 T (204 aa).

The 151-residue stretch at 2–152 (QRASRLKKEL…AKQWTEAHAR (151 aa)) folds into the UBC core domain. The active-site Glycyl thioester intermediate is cysteine 86. Glycyl lysine isopeptide (Lys-Gly) (interchain with G-Cter in ubiquitin) cross-links involve residues lysine 91 and lysine 181. The disordered stretch occupies residues 150–204 (HARQKQKADEEELGTSSEVGDSEESHSTQKRKARPLGGMEKKFSPDVQRVYPGPS). Glycyl lysine isopeptide (Lys-Gly) (interchain with G-Cter in SUMO2) cross-links involve residues lysine 190 and lysine 191. Phosphoserine is present on serine 193.

It belongs to the ubiquitin-conjugating enzyme family. As to quaternary structure, interacts with FANCL and BRCA1. Post-translationally, auto-ubiquitinated. Effects of auto-monoubiquitination at Lys-91 and Lys-181 are unclear.

The protein resides in the nucleus. The catalysed reaction is S-ubiquitinyl-[E1 ubiquitin-activating enzyme]-L-cysteine + [E2 ubiquitin-conjugating enzyme]-L-cysteine = [E1 ubiquitin-activating enzyme]-L-cysteine + S-ubiquitinyl-[E2 ubiquitin-conjugating enzyme]-L-cysteine.. It functions in the pathway protein modification; protein ubiquitination. Accepts ubiquitin from the E1 complex and catalyzes its covalent attachment to other proteins. Catalyzes monoubiquitination. Involved in mitomycin-C (MMC)-induced DNA repair: acts as a specific E2 ubiquitin-conjugating enzyme for the Fanconi anemia complex by associating with E3 ubiquitin-protein ligase FANCL and catalyzing monoubiquitination of FANCD2, a key step in the DNA damage pathway. Also mediates monoubiquitination of FANCL and FANCI. May contribute to ubiquitination and degradation of BRCA1. In vitro able to promote polyubiquitination using all 7 ubiquitin Lys residues, but may prefer 'Lys-11'-, 'Lys-27'-, 'Lys-48'- and 'Lys-63'-linked polyubiquitination. This Mus musculus (Mouse) protein is Ubiquitin-conjugating enzyme E2 T (Ube2t).